The sequence spans 393 residues: Formate-dependent phosphoribosylglycinamide formyltransferase (393 aa).

Residues 22 to 23 and glutamate 82 each bind N(1)-(5-phospho-beta-D-ribosyl)glycinamide; that span reads EL. ATP is bound by residues arginine 114, lysine 155, 160-165, 195-198, and glutamate 203; these read SSGKGQ and EGFI. Residues 119–308 enclose the ATP-grasp domain; the sequence is RLAAEELKLP…QFALHARAIL (190 aa). Mg(2+) is bound by residues glutamate 267 and glutamate 279. Residues aspartate 286, lysine 356, and 363-364 each bind N(1)-(5-phospho-beta-D-ribosyl)glycinamide; that span reads RR.

The protein belongs to the PurK/PurT family. Homodimer.

It carries out the reaction N(1)-(5-phospho-beta-D-ribosyl)glycinamide + formate + ATP = N(2)-formyl-N(1)-(5-phospho-beta-D-ribosyl)glycinamide + ADP + phosphate + H(+). It participates in purine metabolism; IMP biosynthesis via de novo pathway; N(2)-formyl-N(1)-(5-phospho-D-ribosyl)glycinamide from N(1)-(5-phospho-D-ribosyl)glycinamide (formate route): step 1/1. Involved in the de novo purine biosynthesis. Catalyzes the transfer of formate to 5-phospho-ribosyl-glycinamide (GAR), producing 5-phospho-ribosyl-N-formylglycinamide (FGAR). Formate is provided by PurU via hydrolysis of 10-formyl-tetrahydrofolate. The chain is Formate-dependent phosphoribosylglycinamide formyltransferase from Pseudomonas savastanoi pv. phaseolicola (strain 1448A / Race 6) (Pseudomonas syringae pv. phaseolicola (strain 1448A / Race 6)).